The chain runs to 416 residues: Serine/threonine-protein kinase 26 (416 aa).

Alanine 2 bears the N-acetylalanine mark. Serine 4 carries the phosphoserine modification. In terms of domain architecture, Protein kinase spans 24–274 (FTKLERIGKG…AKELLKHKFI (251 aa)). Residues 30–38 (IGKGSFGEV) and lysine 53 contribute to the ATP site. Aspartate 144 acts as the Proton acceptor in catalysis. Position 178 is a phosphothreonine; by autocatalysis (threonine 178). A disordered region spans residues 297–340 (EGHSDDESDSEGSDSESTSRENNTHPEWSFTTVRKKPDPKKVQN). Phosphoserine is present on residues serine 300, serine 304, serine 306, serine 309, and serine 325. Phosphothreonine occurs at positions 327 and 328.

The protein belongs to the protein kinase superfamily. STE Ser/Thr protein kinase family. STE20 subfamily. In terms of assembly, homodimer. Interacts with PDCD10. Interacts with GOLGA2. Interacts with CTTNBP2NL. Interacts with RIPOR1 (via C-terminus); this interaction occurs in a PDCD10-dependent and Rho-independent manner. Interacts with PDCD10; this interaction is required for the association of STK26 with RIPOR1. Part of the core of STRIPAK complexes composed of PP2A catalytic and scaffolding subunits, the striatins (PP2A regulatory subunits), the striatin-associated proteins MOB4, STRIP1 and STRIP2, PDCD10 and members of the STE20 kinases, such as STK24 and STK26. Mg(2+) serves as cofactor.

Its subcellular location is the cytoplasm. It localises to the golgi apparatus. It catalyses the reaction L-seryl-[protein] + ATP = O-phospho-L-seryl-[protein] + ADP + H(+). It carries out the reaction L-threonyl-[protein] + ATP = O-phospho-L-threonyl-[protein] + ADP + H(+). Interaction with Golgi matrix protein GOLGA2 leads to autophosphorylation on Thr-178, possibly as a consequence of stabilization of dimer formation. May also be activated by C-terminal cleavage. Its function is as follows. Serine/threonine-protein kinase that acts as a mediator of cell growth. Modulates apoptosis. In association with STK24 negatively regulates Golgi reorientation in polarized cell migration upon RHO activation. Phosphorylates ATG4B at 'Ser-383', thereby increasing autophagic flux. Part of the striatin-interacting phosphatase and kinase (STRIPAK) complexes. STRIPAK complexes have critical roles in protein (de)phosphorylation and are regulators of multiple signaling pathways including Hippo, MAPK, nuclear receptor and cytoskeleton remodeling. Different types of STRIPAK complexes are involved in a variety of biological processes such as cell growth, differentiation, apoptosis, metabolism and immune regulation. The polypeptide is Serine/threonine-protein kinase 26 (Homo sapiens (Human)).